The primary structure comprises 170 residues: Adenine phosphoribosyltransferase (170 aa).

Belongs to the purine/pyrimidine phosphoribosyltransferase family. As to quaternary structure, homodimer.

It localises to the cytoplasm. The enzyme catalyses AMP + diphosphate = 5-phospho-alpha-D-ribose 1-diphosphate + adenine. The protein operates within purine metabolism; AMP biosynthesis via salvage pathway; AMP from adenine: step 1/1. Its function is as follows. Catalyzes a salvage reaction resulting in the formation of AMP, that is energically less costly than de novo synthesis. This Geobacillus kaustophilus (strain HTA426) protein is Adenine phosphoribosyltransferase.